The primary structure comprises 221 residues: Thiamine-phosphate synthase (221 aa).

4-amino-2-methyl-5-(diphosphooxymethyl)pyrimidine is bound by residues 44-48 and Asn-80; that span reads QLRLK. Residues Asp-81 and Asp-100 each coordinate Mg(2+). Thr-119 contributes to the 4-amino-2-methyl-5-(diphosphooxymethyl)pyrimidine binding site. 146 to 148 contributes to the 2-[(2R,5Z)-2-carboxy-4-methylthiazol-5(2H)-ylidene]ethyl phosphate binding site; that stretch reads TTT. Lys-149 serves as a coordination point for 4-amino-2-methyl-5-(diphosphooxymethyl)pyrimidine. Gly-176 contributes to the 2-[(2R,5Z)-2-carboxy-4-methylthiazol-5(2H)-ylidene]ethyl phosphate binding site.

This sequence belongs to the thiamine-phosphate synthase family. Mg(2+) serves as cofactor.

It carries out the reaction 2-[(2R,5Z)-2-carboxy-4-methylthiazol-5(2H)-ylidene]ethyl phosphate + 4-amino-2-methyl-5-(diphosphooxymethyl)pyrimidine + 2 H(+) = thiamine phosphate + CO2 + diphosphate. The catalysed reaction is 2-(2-carboxy-4-methylthiazol-5-yl)ethyl phosphate + 4-amino-2-methyl-5-(diphosphooxymethyl)pyrimidine + 2 H(+) = thiamine phosphate + CO2 + diphosphate. It catalyses the reaction 4-methyl-5-(2-phosphooxyethyl)-thiazole + 4-amino-2-methyl-5-(diphosphooxymethyl)pyrimidine + H(+) = thiamine phosphate + diphosphate. The protein operates within cofactor biosynthesis; thiamine diphosphate biosynthesis; thiamine phosphate from 4-amino-2-methyl-5-diphosphomethylpyrimidine and 4-methyl-5-(2-phosphoethyl)-thiazole: step 1/1. Condenses 4-methyl-5-(beta-hydroxyethyl)thiazole monophosphate (THZ-P) and 2-methyl-4-amino-5-hydroxymethyl pyrimidine pyrophosphate (HMP-PP) to form thiamine monophosphate (TMP). The protein is Thiamine-phosphate synthase of Hyphomonas neptunium (strain ATCC 15444).